The following is a 952-amino-acid chain: Respiratory burst oxidase homolog protein E (952 aa).

Residues 1-392 lie on the Cytoplasmic side of the membrane; sequence MKLSPLSFST…QCLILDNWQR (392 aa). EF-hand-like stretches follow at residues 211–219 and 245–256; these read SKNGLLARD and RRQKLEKITKDE. EF-hand domains follow at residues 268–303 and 312–347; these read SFDA…SASA and QAEE…RDAY. Ca(2+) contacts are provided by D281, N283, D285, K287, and E292. A helical transmembrane segment spans residues 393-413; the sequence is SWVLLVWVMLMAILFVWKFLE. The Extracellular portion of the chain corresponds to 414–475; it reads YREKAAFKVM…PFDDNINFHK (62 aa). The 157-residue stretch at 431-587 folds into the Ferric oxidoreductase domain; it reads KGAAETLKLN…LLVVVYIMLI (157 aa). A helical membrane pass occupies residues 476–496; the sequence is IIACAIAIGILVHAGTHLACD. Over 497-531 the chain is Cytoplasmic; that stretch reads FPRIINSSPEQFVLIASAFNGTKPTFKDLMTGAEG. The helical transmembrane segment at 532–552 threads the bilayer; the sequence is ITGISMVILTTIAFTLASTHF. Topologically, residues 553 to 574 are extracellular; the sequence is RRNRVRLPAPLDRLTGFNAFWY. The chain crosses the membrane as a helical span at residues 575 to 595; the sequence is THHLLVVVYIMLIVHGTFLFF. The Cytoplasmic portion of the chain corresponds to 596–603; sequence ADKWYQKT. The chain crosses the membrane as a helical span at residues 604–621; sequence TWMYISVPLVLYVAERSL. Residues 622–750 are Extracellular-facing; sequence RACRSKHYSV…PYGAPAQDYR (129 aa). The region spanning 626 to 748 is the FAD-binding FR-type domain; that stretch reads SKHYSVKILK…DGPYGAPAQD (123 aa). The helical transmembrane segment at 751 to 771 threads the bilayer; the sequence is SYDVLLLIGLGIGATPFISIL. At 772–952 the chain is on the cytoplasmic side; the sequence is KDLLNNSRDE…TRFEFHKEHF (181 aa).

This sequence belongs to the RBOH (TC 5.B.1.3) family. As to quaternary structure, monomer and homodimer. As to expression, expressed in roots, inflorescences, leaves and stems.

It is found in the membrane. Calcium-dependent NADPH oxidase that generates superoxide. The protein is Respiratory burst oxidase homolog protein E (RBOHE) of Arabidopsis thaliana (Mouse-ear cress).